The sequence spans 97 residues: Aspartyl/glutamyl-tRNA(Asn/Gln) amidotransferase subunit C (97 aa).

The segment at 59 to 78 is disordered; it reads STGKLRPDEPAQPLSRDDAL. Basic and acidic residues predominate over residues 63–78; that stretch reads LRPDEPAQPLSRDDAL.

This sequence belongs to the GatC family. In terms of assembly, heterotrimer of A, B and C subunits.

It catalyses the reaction L-glutamyl-tRNA(Gln) + L-glutamine + ATP + H2O = L-glutaminyl-tRNA(Gln) + L-glutamate + ADP + phosphate + H(+). It carries out the reaction L-aspartyl-tRNA(Asn) + L-glutamine + ATP + H2O = L-asparaginyl-tRNA(Asn) + L-glutamate + ADP + phosphate + 2 H(+). Allows the formation of correctly charged Asn-tRNA(Asn) or Gln-tRNA(Gln) through the transamidation of misacylated Asp-tRNA(Asn) or Glu-tRNA(Gln) in organisms which lack either or both of asparaginyl-tRNA or glutaminyl-tRNA synthetases. The reaction takes place in the presence of glutamine and ATP through an activated phospho-Asp-tRNA(Asn) or phospho-Glu-tRNA(Gln). The protein is Aspartyl/glutamyl-tRNA(Asn/Gln) amidotransferase subunit C of Metallosphaera sedula (strain ATCC 51363 / DSM 5348 / JCM 9185 / NBRC 15509 / TH2).